We begin with the raw amino-acid sequence, 227 residues long: MICOS complex subunit MIC19 (227 aa).

Gly2 carries the N-myristoyl glycine lipid modification. Position 29 is a phosphoserine (Ser29). Disordered regions lie at residues 34–61 (DRMKESSPSGSKSQRYSGAYGASVSDEE) and 73–92 (EQAKKESEDQKRLKQAKELD). Positions 39-49 (SSPSGSKSQRY) are enriched in polar residues. Residue Tyr49 is modified to Phosphotyrosine. 3 positions are modified to phosphoserine: Ser50, Ser56, and Ser58. Lys142 is modified (N6-acetyllysine). Positions 180-222 (HPVCADLQAKILQCYRENTHQTLKCSALATQYMHCVNHAKQSM) constitute a CHCH domain. 2 short sequence motifs (cx9C motif) span residues 183–193 (CADLQAKILQC) and 204–214 (CSALATQYMHC). Cystine bridges form between Cys183–Cys214 and Cys193–Cys204.

The protein belongs to the MICOS complex subunit Mic19 family. Metazoan Mic19 subfamily. In terms of assembly, component of the mitochondrial contact site and cristae organizing system (MICOS) complex, composed of at least MICOS10/MIC10, CHCHD3/MIC19, CHCHD6/MIC25, APOOL/MIC27, IMMT/MIC60, APOO/MIC23/MIC26 and MICOS13/MIC13. This complex was also known under the names MINOS or MitOS complex. The MICOS complex associates with mitochondrial outer membrane proteins SAMM50, MTX1 and MTX2 (together described as components of the mitochondrial outer membrane sorting assembly machinery (SAM) complex) and DNAJC11, mitochondrial inner membrane protein TMEM11 and with HSPA9. The MICOS and SAM complexes together with DNAJC11 are part of a large protein complex spanning both membranes termed the mitochondrial intermembrane space bridging (MIB) complex. Interacts with HSPA1A/HSPA1B and OPA1, preferentially with the soluble OPA1 form. Interacts with IMMT/MIC60. (Microbial infection) Interacts with human cytomegalovirus protein UL13; this interaction alters cristae architecture. In terms of tissue distribution, detected at low levels in brain, placenta, lung, liver, kidney and pancreas with increased levels in heart and skeletal muscle. Higher expression in primary lung cancers than in normal lung tissue.

Its subcellular location is the mitochondrion inner membrane. The protein resides in the cytoplasm. It is found in the nucleus. It localises to the mitochondrion. Functionally, component of the MICOS complex, a large protein complex of the mitochondrial inner membrane that plays crucial roles in the maintenance of crista junctions, inner membrane architecture, and formation of contact sites to the outer membrane. Plays an important role in the maintenance of the MICOS complex stability and the mitochondrial cristae morphology. Has also been shown to function as a transcription factor which binds to the BAG1 promoter and represses BAG1 transcription. The polypeptide is MICOS complex subunit MIC19 (CHCHD3) (Homo sapiens (Human)).